The primary structure comprises 457 residues: Multidrug resistance protein MdtK (457 aa).

12 consecutive transmembrane segments (helical) span residues 11–31, 53–73, 93–113, 127–147, 160–180, 188–208, 243–263, 276–296, 314–334, 350–370, 387–407, and 418–438; these read LLAL…MGFV, IWLP…PVIA, WLAG…GYII, AVGY…FQVA, GMVM…IFIY, LGGI…FIAM, LPIA…ALLV, IALN…AAVT, AART…IFTV, VVAL…SDSI, IFFI…YILA, and PAGF…LMML.

Belongs to the multi antimicrobial extrusion (MATE) (TC 2.A.66.1) family. MdtK subfamily.

Its subcellular location is the cell inner membrane. Functionally, multidrug efflux pump that functions probably as a Na(+)/drug antiporter. This Salmonella newport (strain SL254) protein is Multidrug resistance protein MdtK.